The sequence spans 62 residues: Large ribosomal subunit protein bL32 (62 aa).

A compositionally biased stretch (basic residues) spans 1–19; sequence MPNPKRRHSKARTGNRRAH. The interval 1 to 23 is disordered; sequence MPNPKRRHSKARTGNRRAHDHLS.

This sequence belongs to the bacterial ribosomal protein bL32 family.

This chain is Large ribosomal subunit protein bL32, found in Koribacter versatilis (strain Ellin345).